We begin with the raw amino-acid sequence, 575 residues long: Transcription factor collier (575 aa).

The segment at 79–82 is interaction with DNA; that stretch reads RKSN. Residues 167-186 form a C5-type zinc finger; it reads CRVLLTHEVMCSRCCDKKSC. Interaction with DNA regions lie at residues 213–220 and 252–255; these read NCLKNAGN and NNSK. Positions 255–278 are disordered; the sequence is KHGRRAKRLDTTEGTGNTSLSISG. Positions 266-276 are enriched in polar residues; sequence TEGTGNTSLSI. One can recognise an IPT/TIG domain in the interval 299 to 382; the sequence is PCIKAISPSE…KGSPGRFVYV (84 aa). Disordered regions lie at residues 456–492 and 546–575; these read GQWT…GSYG and AATA…AAAV. The segment covering 479–492 has biased composition (low complexity); that stretch reads SSASTPHSSGGSYG. The segment covering 546-557 has biased composition (basic residues); that stretch reads AATAHPHHHYPH. Residues 561–575 are compositionally biased toward low complexity; that stretch reads PWHNPAVSAATAAAV.

This sequence belongs to the COE family. In terms of tissue distribution, its expression at the blastoderm stage is restricted to a single stripe of cells corresponding to part of the intercalary and mandibular segment primordia, possibly parasegment O.

The protein localises to the nucleus. Its function is as follows. May act as a 'second-level regulator' of head patterning. Required for establishment of the PS(-1)/PS0 parasegmental border and formation of the intercalary segment. Required for expression of the segment polarity genes hedgehog, engrailed and wingless, and the segment-identity genes CAP and collar in the intercalary segment. Required at the onset of the gastrulation for the correct formation of the mandibular segment. The sequence is that of Transcription factor collier (kn) from Drosophila melanogaster (Fruit fly).